We begin with the raw amino-acid sequence, 506 residues long: Anaerobic nitric oxide reductase transcription regulator NorR (506 aa).

Asp-57 carries the 4-aspartylphosphate modification. One can recognise a Sigma-54 factor interaction domain in the interval 187-416 (MIGLSPAMTQ…LEHAIHRAVV (230 aa)). Residues 215-222 (GETGTGKE) and 278-287 (ADNGTLFLDE) contribute to the ATP site. Positions 481–500 (WAASARALETDVANLHRLAK) form a DNA-binding region, H-T-H motif.

It functions in the pathway nitrogen metabolism; nitric oxide reduction. Functionally, required for the expression of anaerobic nitric oxide (NO) reductase, acts as a transcriptional activator for at least the norVW operon. Activation also requires sigma-54. This is Anaerobic nitric oxide reductase transcription regulator NorR from Salmonella paratyphi C (strain RKS4594).